The following is a 132-amino-acid chain: Chemokine-like protein TAFA-5 (132 aa).

An N-terminal signal peptide occupies residues 1 to 43; the sequence is MAPSPRTSSRQDATALPSMSSTFWAFMILASLLIAYCSQLAAG. Asn-113 carries N-linked (GlcNAc...) asparagine glycosylation.

This sequence belongs to the TAFA family. As to expression, expressed in the subcutaneous, brown, epididymal and perirenal adipose tissue (at protein level).

The protein resides in the secreted. In terms of biological role, acts as a chemokine-like protein by regulating cell proliferation and migration through activation of G protein-coupled receptors (GPCRs), such as S1PR2 and FPR2. Stimulates chemotactic migration of macrophages mediated by the MAPK3/ERK1 and AKT1 pathway. Blocks TNFSF11/RANKL-induced osteoclast formation from macrophages by inhibiting up-regulation of osteoclast fusogenic and differentiation genes. Stimulation of macrophage migration and inhibition of osteoclast formation is mediated through the GPCR FPR2. Acts as an adipokine by negatively regulating vascular smooth muscle cell (VSMC) proliferation and migration in response to platelet-derived growth factor stimulation via GPCR S1PR2 and G protein GNA12/GNA13-transmitted RHOA signaling. Inhibits injury-induced cell proliferation and neointima formation in the femoral arteries. The sequence is that of Chemokine-like protein TAFA-5 (Tafa5) from Mus musculus (Mouse).